The primary structure comprises 164 residues: Putative 4-hydroxy-4-methyl-2-oxoglutarate aldolase (164 aa).

Substrate-binding positions include 80 to 83 (GGNL) and arginine 102. An a divalent metal cation-binding site is contributed by aspartate 103.

This sequence belongs to the class II aldolase/RraA-like family. Homotrimer. A divalent metal cation is required as a cofactor.

The enzyme catalyses 4-hydroxy-4-methyl-2-oxoglutarate = 2 pyruvate. It catalyses the reaction oxaloacetate + H(+) = pyruvate + CO2. Catalyzes the aldol cleavage of 4-hydroxy-4-methyl-2-oxoglutarate (HMG) into 2 molecules of pyruvate. Also contains a secondary oxaloacetate (OAA) decarboxylase activity due to the common pyruvate enolate transition state formed following C-C bond cleavage in the retro-aldol and decarboxylation reactions. This chain is Putative 4-hydroxy-4-methyl-2-oxoglutarate aldolase, found in Paraburkholderia phytofirmans (strain DSM 17436 / LMG 22146 / PsJN) (Burkholderia phytofirmans).